We begin with the raw amino-acid sequence, 308 residues long: Ribosomal RNA small subunit methyltransferase H (308 aa).

Residues 35–37, aspartate 55, phenylalanine 79, aspartate 100, and glutamine 107 each bind S-adenosyl-L-methionine; that span reads GGH.

The protein belongs to the methyltransferase superfamily. RsmH family.

Its subcellular location is the cytoplasm. It catalyses the reaction cytidine(1402) in 16S rRNA + S-adenosyl-L-methionine = N(4)-methylcytidine(1402) in 16S rRNA + S-adenosyl-L-homocysteine + H(+). In terms of biological role, specifically methylates the N4 position of cytidine in position 1402 (C1402) of 16S rRNA. The sequence is that of Ribosomal RNA small subunit methyltransferase H from Dechloromonas aromatica (strain RCB).